The sequence spans 1249 residues: Calmodulin-regulated spectrin-associated protein 3 (1249 aa).

Disordered regions lie at residues 183–205 (KTEQ…APAQ), 328–385 (PDGH…SMSH), 430–457 (VSSD…GDLP), 473–609 (LLPD…RLEE), 632–696 (LGKS…HEGL), 714–1029 (QRDM…SALA), and 1061–1111 (NNLG…TGPR). Thr184 bears the Phosphothreonine mark. Over residues 189-205 (AQRASPAAPADGAAPAQ) the composition is skewed to low complexity. Residue Ser193 is modified to Phosphoserine. Residues 203–312 (PAQPSIRYRK…LVVMLAELFM (110 aa)) form the Calponin-homology (CH) domain. Phosphoserine is present on residues Ser334, Ser341, Ser347, Ser351, Ser368, Ser373, and Ser382. Positions 341–352 (SPPQNNSGSSSP) are enriched in low complexity. Positions 364 to 383 (GGPQSPLRGSTGSLKSSPSM) are enriched in polar residues. The segment covering 437 to 454 (PPRPAPARTPTQPPPEPG) has biased composition (pro residues). Ser547, Ser554, and Ser560 each carry phosphoserine. The segment covering 568–579 (AERKKQLVKAEA) has biased composition (basic and acidic residues). Low complexity predominate over residues 594–604 (EALSSEMSELS). A coiled-coil region spans residues 594-628 (EALSSEMSELSARLEEKRRAIEAQKRRIEAIFAKH). Over residues 647-657 (GEAEAEAEEAD) the composition is skewed to acidic residues. Ser685 is modified (phosphoserine). Positions 696–729 (LGEYNRAVSKLSAALSSLQRDMQRLTDQQQRLLA) form a coiled coil. A compositionally biased stretch (pro residues) spans 731–741 (PEAPGSAPPPA). A compositionally biased stretch (low complexity) spans 754 to 779 (AASPSPARRVPATRRSPGPGPSQSPR). Ser769 is subject to Phosphoserine. Thr799 bears the Phosphothreonine mark. Position 814 is a phosphoserine (Ser814). Positions 814–825 (SPSQVPVQTRSS) are enriched in polar residues. Residues 889 to 940 (YKDEDKPEDEMAQKRASLLERQQRRAEEARRRKQWQEVEKEQRREEAARLAQ) show a composition bias toward basic and acidic residues. A coiled-coil region spans residues 896-935 (EDEMAQKRASLLERQQRRAEEARRRKQWQEVEKEQRREEA). A compositionally biased stretch (low complexity) spans 950 to 964 (VSAVPMATPAPAARA). Residues 970–998 (VGPRKGDFTRQEYERRAQLKLMDDLDKVL) are compositionally biased toward basic and acidic residues. Position 1074 is a phosphoserine (Ser1074). The region spanning 1109–1243 (GPRLYKEPSA…QGKKPTTPKK (135 aa)) is the CKK domain.

The protein belongs to the CAMSAP1 family. As to quaternary structure, interacts with PLEKHA7. Interacts with CAMSAP2. Interacts with KATNA1 and KATNB1; leading to regulate the length of CAMSAP3-decorated microtubule stretches. Interacts with AKAP9; regulating Golgi assembly in epithelial cells. Interacts with MACF1. Interacts with AKNA.

The protein resides in the cytoplasm. Its subcellular location is the cytoskeleton. It localises to the cell junction. It is found in the adherens junction. The protein localises to the cilium axoneme. The protein resides in the cilium basal body. In terms of biological role, key microtubule-organizing protein that specifically binds the minus-end of non-centrosomal microtubules and regulates their dynamics and organization. Specifically recognizes growing microtubule minus-ends and autonomously decorates and stabilizes microtubule lattice formed by microtubule minus-end polymerization. Acts on free microtubule minus-ends that are not capped by microtubule-nucleating proteins or other factors and protects microtubule minus-ends from depolymerization. In addition, it also reduces the velocity of microtubule polymerization. Required for the biogenesis and the maintenance of zonula adherens by anchoring the minus-end of microtubules to zonula adherens and by recruiting the kinesin KIFC3 to those junctional sites. Required for orienting the apical-to-basal polarity of microtubules in epithelial cells: acts by tethering non-centrosomal microtubules to the apical cortex, leading to their longitudinal orientation. Plays a key role in early embryos, which lack centrosomes: accumulates at the microtubule bridges that connect pairs of cells and enables the formation of a non-centrosomal microtubule-organizing center that directs intracellular transport in the early embryo. Couples non-centrosomal microtubules with actin: interaction with MACF1 at the minus ends of non-centrosomal microtubules, tethers the microtubules to actin filaments, regulating focal adhesion size and cell migration. Plays a key role in the generation of non-centrosomal microtubules by accumulating in the pericentrosomal region and cooperating with KATNA1 to release non-centrosomal microtubules from the centrosome. Through the microtubule cytoskeleton, also regulates the organization of cellular organelles including the Golgi and the early endosomes. Through interaction with AKAP9, involved in translocation of Golgi vesicles in epithelial cells, where microtubules are mainly non-centrosomal. Plays an important role in motile cilia function by facilitatating proper orientation of basal bodies and formation of central microtubule pairs in motile cilia. This Homo sapiens (Human) protein is Calmodulin-regulated spectrin-associated protein 3.